The following is a 238-amino-acid chain: Accessory gene regulator A (238 aa).

The Response regulatory domain maps to 2–125 (KIFICEDDPK…LRTRIIDCLE (124 aa)). Residue D59 is modified to 4-aspartylphosphate. One can recognise an HTH LytTR-type domain in the interval 143-238 (IELKRGSNSV…YASVRNVKKK (96 aa)).

Its subcellular location is the cytoplasm. Its function is as follows. Required for high-level post-exponential phase expression of a series of secreted proteins. In Staphylococcus aureus (strain Mu50 / ATCC 700699), this protein is Accessory gene regulator A (agrA).